A 500-amino-acid chain; its full sequence is Ribose import ATP-binding protein RbsA (500 aa).

2 consecutive ABC transporter domains span residues 6-242 (LALS…VGRK) and 252-495 (AQQG…VGRN). An ATP-binding site is contributed by 38-45 (GENGAGKS).

This sequence belongs to the ABC transporter superfamily. Ribose importer (TC 3.A.1.2.1) family. In terms of assembly, the complex is composed of an ATP-binding protein (RbsA), two transmembrane proteins (RbsC) and a solute-binding protein (RbsB).

It is found in the cell inner membrane. The enzyme catalyses D-ribose(out) + ATP + H2O = D-ribose(in) + ADP + phosphate + H(+). In terms of biological role, part of the ABC transporter complex RbsABC involved in ribose import. Responsible for energy coupling to the transport system. The protein is Ribose import ATP-binding protein RbsA of Vibrio cholerae serotype O1 (strain ATCC 39315 / El Tor Inaba N16961).